A 459-amino-acid chain; its full sequence is Cysteine--tRNA ligase (459 aa).

C27 contributes to the Zn(2+) binding site. The 'HIGH' region signature appears at P29–N39. Zn(2+)-binding residues include C211, H236, and E240. Residues K269 to S273 carry the 'KMSKS' region motif. K272 lines the ATP pocket.

This sequence belongs to the class-I aminoacyl-tRNA synthetase family. Monomer. Zn(2+) serves as cofactor.

It localises to the cytoplasm. The enzyme catalyses tRNA(Cys) + L-cysteine + ATP = L-cysteinyl-tRNA(Cys) + AMP + diphosphate. The chain is Cysteine--tRNA ligase from Ehrlichia canis (strain Jake).